The chain runs to 362 residues: Molybdenum import ATP-binding protein ModC (362 aa).

An ABC transporter domain is found at 2–236 (ASPIEVRLHM…LDLPLAMGGD (235 aa)). 34–41 (GPSGSGKT) is an ATP binding site. The region spanning 297–362 (QSSILNRLPV…AQIKAVAVLA (66 aa)) is the Mop domain.

The protein belongs to the ABC transporter superfamily. Molybdate importer (TC 3.A.1.8) family. The complex is composed of two ATP-binding proteins (ModC), two transmembrane proteins (ModB) and a solute-binding protein (ModA).

Its subcellular location is the cell inner membrane. It carries out the reaction molybdate(out) + ATP + H2O = molybdate(in) + ADP + phosphate + H(+). Functionally, part of the ABC transporter complex ModABC involved in molybdenum import. Responsible for energy coupling to the transport system. The protein is Molybdenum import ATP-binding protein ModC of Pseudomonas savastanoi pv. phaseolicola (strain 1448A / Race 6) (Pseudomonas syringae pv. phaseolicola (strain 1448A / Race 6)).